We begin with the raw amino-acid sequence, 98 residues long: Bombyxin A-3 homolog (98 aa).

Positions 1-18 (MRTQVLFLVLEVAAMASG) are cleaved as a signal peptide. Disulfide bonds link Cys-26/Cys-85, Cys-38/Cys-98, and Cys-84/Cys-89. Residues 47-75 (TPYTSSESEGYGWRWLAPQRARQLAGARG) constitute a propeptide, c peptide like.

Belongs to the insulin family. In terms of assembly, heterodimer of a B chain and an A chain linked by two disulfide bonds.

The protein resides in the secreted. Its function is as follows. Brain peptide responsible for activation of prothoracic glands to produce ecdysone in insects. This Samia cynthia (Ailanthus silkmoth) protein is Bombyxin A-3 homolog (SBXA3).